The sequence spans 80 residues: Cell division protein ZapB (80 aa).

Residues 3-80 (FEVFEKLEAK…ALLGKMEDVQ (78 aa)) adopt a coiled-coil conformation.

The protein belongs to the ZapB family. Homodimer. The ends of the coiled-coil dimer bind to each other, forming polymers. Interacts with FtsZ.

Its subcellular location is the cytoplasm. Non-essential, abundant cell division factor that is required for proper Z-ring formation. It is recruited early to the divisome by direct interaction with FtsZ, stimulating Z-ring assembly and thereby promoting cell division earlier in the cell cycle. Its recruitment to the Z-ring requires functional FtsA or ZipA. The chain is Cell division protein ZapB from Photorhabdus laumondii subsp. laumondii (strain DSM 15139 / CIP 105565 / TT01) (Photorhabdus luminescens subsp. laumondii).